Here is a 562-residue protein sequence, read N- to C-terminus: Probable malate:quinone oxidoreductase (562 aa).

The segment at 530-562 is disordered; that stretch reads EVPDKSATPTDPTIAPKHQHSTTHNANSEMQAL. The segment covering 551–562 has biased composition (polar residues); sequence TTHNANSEMQAL.

It belongs to the MQO family. Requires FAD as cofactor.

The enzyme catalyses (S)-malate + a quinone = a quinol + oxaloacetate. Its pathway is carbohydrate metabolism; tricarboxylic acid cycle; oxaloacetate from (S)-malate (quinone route): step 1/1. The chain is Probable malate:quinone oxidoreductase from Xylella fastidiosa (strain M12).